A 178-amino-acid polypeptide reads, in one-letter code: uncharacterized protein (178 aa).

Residues 7-29 form a helical membrane-spanning segment; the sequence is FFVIFSILWGSLFLFSIIGSLGT.

The protein resides in the membrane. This is an uncharacterized protein from Bacillus subtilis (strain 168).